The chain runs to 465 residues: Argininosuccinate lyase (465 aa).

This sequence belongs to the lyase 1 family. Argininosuccinate lyase subfamily.

The protein resides in the cytoplasm. It catalyses the reaction 2-(N(omega)-L-arginino)succinate = fumarate + L-arginine. It participates in amino-acid biosynthesis; L-arginine biosynthesis; L-arginine from L-ornithine and carbamoyl phosphate: step 3/3. The protein is Argininosuccinate lyase of Clostridium botulinum (strain Alaska E43 / Type E3).